We begin with the raw amino-acid sequence, 990 residues long: Chondroitin sulfate ABC exolyase (990 aa).

H453 acts as the Proton acceptor in catalysis. The active-site Proton donor is the Y460.

Belongs to the polysaccharide lyase 8 family.

It carries out the reaction Exolytic removal of Delta(4)-unsaturated disaccharide residues from the non-reducing ends of both polymeric chondroitin/dermatan sulfates and their oligosaccharide fragments.. With respect to regulation, inhibited by Zn(2+), whereas Ni(2+), Fe(2+), and Cu(2+) have little or no effect on activity. Functionally, broad-specificity glycosaminoglycan lyase, which acts in an exolytic fashion, and preferentially degrades the tetra- and hexasaccharide derivatives of chondroitin sulfate and dermatan sulfate produced by the chondroitin sulfate ABC endolyase, to yield the respective disaccharides. To a lesser extent, is also able to split off disaccharide residues directly from polymeric chondroitin 4- and 6-sulfate, dermatan sulfate, chondroitin, and hyaluronan. Is not active against keratan sulfate, heparan sulfate, and heparin. In Proteus vulgaris, this protein is Chondroitin sulfate ABC exolyase (ChABCII).